The following is a 427-amino-acid chain: Enolase (427 aa).

(2R)-2-phosphoglycerate is bound at residue Gln163. The active-site Proton donor is Glu205. 3 residues coordinate Mg(2+): Asp242, Glu285, and Asp312. 4 residues coordinate (2R)-2-phosphoglycerate: Lys337, Arg366, Ser367, and Lys388. The Proton acceptor role is filled by Lys337.

This sequence belongs to the enolase family. The cofactor is Mg(2+).

The protein resides in the cytoplasm. Its subcellular location is the secreted. It is found in the cell surface. It carries out the reaction (2R)-2-phosphoglycerate = phosphoenolpyruvate + H2O. Its pathway is carbohydrate degradation; glycolysis; pyruvate from D-glyceraldehyde 3-phosphate: step 4/5. In terms of biological role, catalyzes the reversible conversion of 2-phosphoglycerate (2-PG) into phosphoenolpyruvate (PEP). It is essential for the degradation of carbohydrates via glycolysis. This Rhodopseudomonas palustris (strain HaA2) protein is Enolase.